The primary structure comprises 101 residues: NADH-quinone oxidoreductase subunit K (101 aa).

3 helical membrane-spanning segments follow: residues Leu4 to Leu24, Ile30 to Phe50, and Val61 to Leu81.

This sequence belongs to the complex I subunit 4L family. NDH-1 is composed of 14 different subunits. Subunits NuoA, H, J, K, L, M, N constitute the membrane sector of the complex.

The protein localises to the cell inner membrane. The catalysed reaction is a quinone + NADH + 5 H(+)(in) = a quinol + NAD(+) + 4 H(+)(out). Functionally, NDH-1 shuttles electrons from NADH, via FMN and iron-sulfur (Fe-S) centers, to quinones in the respiratory chain. The immediate electron acceptor for the enzyme in this species is believed to be ubiquinone. Couples the redox reaction to proton translocation (for every two electrons transferred, four hydrogen ions are translocated across the cytoplasmic membrane), and thus conserves the redox energy in a proton gradient. The polypeptide is NADH-quinone oxidoreductase subunit K (Thiobacillus denitrificans (strain ATCC 25259 / T1)).